The sequence spans 90 residues: MSSSITTPEGIINPPIDELLEATDSKYSLVIYAAKRARQINAYYSQLGEGLLEYVGPLVDTHVHEKPLSIALREINAGLLTSEAIEGPAQ.

It belongs to the RNA polymerase subunit omega family. In terms of assembly, the RNAP catalytic core consists of 2 alpha, 1 beta, 1 beta' and 1 omega subunit. When a sigma factor is associated with the core the holoenzyme is formed, which can initiate transcription.

The enzyme catalyses RNA(n) + a ribonucleoside 5'-triphosphate = RNA(n+1) + diphosphate. Functionally, promotes RNA polymerase assembly. Latches the N- and C-terminal regions of the beta' subunit thereby facilitating its interaction with the beta and alpha subunits. The polypeptide is DNA-directed RNA polymerase subunit omega (Streptomyces griseus subsp. griseus (strain JCM 4626 / CBS 651.72 / NBRC 13350 / KCC S-0626 / ISP 5235)).